The following is a 309-amino-acid chain: Homoserine O-succinyltransferase (309 aa).

Catalysis depends on C142, which acts as the Acyl-thioester intermediate. The substrate site is built by K163 and S192. H235 (proton acceptor) is an active-site residue. The active site involves E237. Position 249 (R249) interacts with substrate.

It belongs to the MetA family. Homodimer.

It localises to the cytoplasm. The enzyme catalyses L-homoserine + succinyl-CoA = O-succinyl-L-homoserine + CoA. It functions in the pathway amino-acid biosynthesis; L-methionine biosynthesis via de novo pathway; O-succinyl-L-homoserine from L-homoserine: step 1/1. Its function is as follows. Transfers a succinyl group from succinyl-CoA to L-homoserine, forming succinyl-L-homoserine. The sequence is that of Homoserine O-succinyltransferase from Escherichia coli (strain K12 / MC4100 / BW2952).